The chain runs to 301 residues: Dihydroorotate dehydrogenase B (NAD(+)), catalytic subunit (301 aa).

Residues Ser21 and 45–46 contribute to the FMN site; that span reads KS. Residues Lys45, 69 to 73, and Asn125 each bind substrate; that span reads NAVGL. Asn125 serves as a coordination point for FMN. Cys128 acts as the Nucleophile in catalysis. Positions 163 and 187 each coordinate FMN. Residue 188–189 coordinates substrate; that stretch reads NT. FMN contacts are provided by residues Gly213, 239 to 240, and 261 to 262; these read GG and GT.

This sequence belongs to the dihydroorotate dehydrogenase family. Type 1 subfamily. As to quaternary structure, heterotetramer of 2 PyrK and 2 PyrD type B subunits. Requires FMN as cofactor.

The protein resides in the cytoplasm. The enzyme catalyses (S)-dihydroorotate + NAD(+) = orotate + NADH + H(+). It participates in pyrimidine metabolism; UMP biosynthesis via de novo pathway; orotate from (S)-dihydroorotate (NAD(+) route): step 1/1. Functionally, catalyzes the conversion of dihydroorotate to orotate with NAD(+) as electron acceptor. The chain is Dihydroorotate dehydrogenase B (NAD(+)), catalytic subunit (pyrD) from Thermoplasma volcanium (strain ATCC 51530 / DSM 4299 / JCM 9571 / NBRC 15438 / GSS1).